The primary structure comprises 417 residues: Serine hydroxymethyltransferase 2 (417 aa).

(6S)-5,6,7,8-tetrahydrofolate is bound by residues Leu-121 and 125-127; that span reads GHL. Residue Lys-229 is modified to N6-(pyridoxal phosphate)lysine. 354–356 is a binding site for (6S)-5,6,7,8-tetrahydrofolate; it reads SPF.

The protein belongs to the SHMT family. As to quaternary structure, homodimer. Pyridoxal 5'-phosphate serves as cofactor.

Its subcellular location is the cytoplasm. It catalyses the reaction (6R)-5,10-methylene-5,6,7,8-tetrahydrofolate + glycine + H2O = (6S)-5,6,7,8-tetrahydrofolate + L-serine. Its pathway is one-carbon metabolism; tetrahydrofolate interconversion. It participates in amino-acid biosynthesis; glycine biosynthesis; glycine from L-serine: step 1/1. Functionally, catalyzes the reversible interconversion of serine and glycine with tetrahydrofolate (THF) serving as the one-carbon carrier. This reaction serves as the major source of one-carbon groups required for the biosynthesis of purines, thymidylate, methionine, and other important biomolecules. Also exhibits THF-independent aldolase activity toward beta-hydroxyamino acids, producing glycine and aldehydes, via a retro-aldol mechanism. The chain is Serine hydroxymethyltransferase 2 from Pseudomonas fluorescens (strain Pf0-1).